The sequence spans 513 residues: GMP synthase [glutamine-hydrolyzing] (513 aa).

Positions 3–200 constitute a Glutamine amidotransferase type-1 domain; sequence SVLVLDFGSQ…LLNIAGITPD (198 aa). C80 serves as the catalytic Nucleophile. Catalysis depends on residues H174 and E176. The GMPS ATP-PPase domain occupies 201-388; the sequence is WSSKSFIDHQ…LGIAEDILMR (188 aa). 228–234 is an ATP binding site; that stretch reads SGGVDST.

As to quaternary structure, homodimer.

It carries out the reaction XMP + L-glutamine + ATP + H2O = GMP + L-glutamate + AMP + diphosphate + 2 H(+). It functions in the pathway purine metabolism; GMP biosynthesis; GMP from XMP (L-Gln route): step 1/1. Its function is as follows. Catalyzes the synthesis of GMP from XMP. The protein is GMP synthase [glutamine-hydrolyzing] of Chlorobium phaeovibrioides (strain DSM 265 / 1930) (Prosthecochloris vibrioformis (strain DSM 265)).